We begin with the raw amino-acid sequence, 475 residues long: Ankyrin repeat, SAM and basic leucine zipper domain-containing protein 1 (475 aa).

The disordered stretch occupies residues 1–24 (MAAAVQRGLPVAGGGESSESEDDG). Serine 17, serine 18, and serine 20 each carry phosphoserine. ANK repeat units follow at residues 45-74 (EKNE…SVES), 78-107 (YGWT…NASF), 110-144 (DKHT…DPNV), 148-177 (RLMT…EVNA), 181-210 (NGYT…NKML), and 214-243 (DGKT…PLEG). Residues 272 to 334 (SYAAFGDLEI…KILAALKELA (63 aa)) enclose the SAM domain.

In terms of assembly, interacts with DDX4, PIWIL1, RANBP9 and TDRD1.

It is found in the cytoplasm. Plays a central role during spermatogenesis by repressing transposable elements and preventing their mobilization, which is essential for the germline integrity. Acts via the piRNA metabolic process, which mediates the repression of transposable elements during meiosis by forming complexes composed of piRNAs and Piwi proteins and governs the methylation and subsequent repression of transposons. Its association with pi-bodies suggests a participation in the primary piRNAs metabolic process. Required prior to the pachytene stage to facilitate the production of multiple types of piRNAs, including those associated with repeats involved in the regulation of retrotransposons. May act by mediating protein-protein interactions during germ cell maturation. The chain is Ankyrin repeat, SAM and basic leucine zipper domain-containing protein 1 (ASZ1) from Loxodonta africana (African elephant).